We begin with the raw amino-acid sequence, 88 residues long: Small ribosomal subunit protein bS20 (88 aa).

The interval 1–21 is disordered; the sequence is MANSAQAKKRARQNVKARKHN. Positions 7-21 are enriched in basic residues; it reads AKKRARQNVKARKHN.

This sequence belongs to the bacterial ribosomal protein bS20 family.

Binds directly to 16S ribosomal RNA. This Acinetobacter baumannii (strain AB307-0294) protein is Small ribosomal subunit protein bS20.